The primary structure comprises 911 residues: Protein translocase subunit SecA (911 aa).

Residues Gln-87, 105-109 (GEGKT), and Asp-499 contribute to the ATP site. Positions 895, 897, 906, and 907 each coordinate Zn(2+).

The protein belongs to the SecA family. As to quaternary structure, monomer and homodimer. Part of the essential Sec protein translocation apparatus which comprises SecA, SecYEG and auxiliary proteins SecDF-YajC and YidC. Requires Zn(2+) as cofactor.

It localises to the cell inner membrane. The protein resides in the cytoplasm. It catalyses the reaction ATP + H2O + cellular proteinSide 1 = ADP + phosphate + cellular proteinSide 2.. In terms of biological role, part of the Sec protein translocase complex. Interacts with the SecYEG preprotein conducting channel. Has a central role in coupling the hydrolysis of ATP to the transfer of proteins into and across the cell membrane, serving both as a receptor for the preprotein-SecB complex and as an ATP-driven molecular motor driving the stepwise translocation of polypeptide chains across the membrane. The chain is Protein translocase subunit SecA from Novosphingobium aromaticivorans (strain ATCC 700278 / DSM 12444 / CCUG 56034 / CIP 105152 / NBRC 16084 / F199).